A 162-amino-acid chain; its full sequence is Cyclic pyranopterin monophosphate synthase (162 aa).

Substrate contacts are provided by residues M75–H77 and M115–E116. D130 is a catalytic residue.

This sequence belongs to the MoaC family. Homohexamer; trimer of dimers.

The enzyme catalyses (8S)-3',8-cyclo-7,8-dihydroguanosine 5'-triphosphate = cyclic pyranopterin phosphate + diphosphate. It participates in cofactor biosynthesis; molybdopterin biosynthesis. In terms of biological role, catalyzes the conversion of (8S)-3',8-cyclo-7,8-dihydroguanosine 5'-triphosphate to cyclic pyranopterin monophosphate (cPMP). The protein is Cyclic pyranopterin monophosphate synthase of Geobacillus kaustophilus (strain HTA426).